The chain runs to 462 residues: Signal recognition particle protein (462 aa).

Residues Gly107–Thr114, Asp190–Arg194, and Thr248–Asp251 each bind GTP.

It belongs to the GTP-binding SRP family. SRP54 subfamily. In terms of assembly, part of the signal recognition particle protein translocation system, which is composed of SRP and FtsY. SRP is a ribonucleoprotein composed of Ffh and a 4.5S RNA molecule.

It is found in the cytoplasm. It catalyses the reaction GTP + H2O = GDP + phosphate + H(+). Functionally, involved in targeting and insertion of nascent membrane proteins into the cytoplasmic membrane. Binds to the hydrophobic signal sequence of the ribosome-nascent chain (RNC) as it emerges from the ribosomes. The SRP-RNC complex is then targeted to the cytoplasmic membrane where it interacts with the SRP receptor FtsY. Interaction with FtsY leads to the transfer of the RNC complex to the Sec translocase for insertion into the membrane, the hydrolysis of GTP by both Ffh and FtsY, and the dissociation of the SRP-FtsY complex into the individual components. This Haemophilus influenzae (strain ATCC 51907 / DSM 11121 / KW20 / Rd) protein is Signal recognition particle protein.